Reading from the N-terminus, the 534-residue chain is Lariat debranching enzyme (534 aa).

A divalent metal cation contacts are provided by Cys8, His10, Asp39, and Asn84. The interval 124-154 (SGIFKGHDFLRGHHEFPPYTDSTCRSVYHVR) is lariat recognition loop. Residues His174, His226, and His228 each contribute to the a divalent metal cation site. Disordered stretches follow at residues 242-275 (KLGDAESSSSSSSSEDEDEEREKVKKAAPVPPPS) and 501-534 (TETPHVEEPASVPASPNVKKLKRRNQNIYQAQED).

Belongs to the lariat debranching enzyme family. The cofactor is Fe(2+). Requires Zn(2+) as cofactor. It depends on Mn(2+) as a cofactor.

It localises to the nucleus. Its activity is regulated as follows. Active in presence of diverse metals including Fe(2+), Zn(2+), Mn(2+). Binds two metal cations in two adjacent alpha and beta metal-binding pockets. Cleaves the 2'-5' phosphodiester linkage at the branch point of lariat intron pre-mRNAs after splicing and converts them into linear molecules that are subsequently degraded. It thereby facilitates ribonucleotide turnover. In Drosophila melanogaster (Fruit fly), this protein is Lariat debranching enzyme (ldbr).